We begin with the raw amino-acid sequence, 281 residues long: Proteasome subunit beta (281 aa).

A propeptide spans 1–53 (MEANTRSTGRLPAAFLTPGSSSFMDFLSDQSPEMLPGNRSLPPLQGAVEAPHG) (removed in mature form; by autocatalysis). The Nucleophile role is filled by Thr54.

Belongs to the peptidase T1B family. The 20S proteasome core is composed of 14 alpha and 14 beta subunits that assemble into four stacked heptameric rings, resulting in a barrel-shaped structure. The two inner rings, each composed of seven catalytic beta subunits, are sandwiched by two outer rings, each composed of seven alpha subunits. The catalytic chamber with the active sites is on the inside of the barrel. Has a gated structure, the ends of the cylinder being occluded by the N-termini of the alpha-subunits. Is capped by the proteasome-associated ATPase, ARC.

The protein resides in the cytoplasm. The enzyme catalyses Cleavage of peptide bonds with very broad specificity.. The protein operates within protein degradation; proteasomal Pup-dependent pathway. Its activity is regulated as follows. The formation of the proteasomal ATPase ARC-20S proteasome complex, likely via the docking of the C-termini of ARC into the intersubunit pockets in the alpha-rings, may trigger opening of the gate for substrate entry. Interconversion between the open-gate and close-gate conformations leads to a dynamic regulation of the 20S proteasome proteolysis activity. Component of the proteasome core, a large protease complex with broad specificity involved in protein degradation. The chain is Proteasome subunit beta from Streptomyces griseus subsp. griseus (strain JCM 4626 / CBS 651.72 / NBRC 13350 / KCC S-0626 / ISP 5235).